Reading from the N-terminus, the 492-residue chain is Bifunctional shikimate kinase/3-dehydroquinate synthase (492 aa).

The segment at 1–161 (MRIFLVGMMG…TALVVLEALD (161 aa)) is shikimate kinase. Position 10–15 (10–15 (GSGKST)) interacts with ATP. Residue Ser14 coordinates Mg(2+). The substrate site is built by Asp32, Arg56, and Gly78. Arg114 is a binding site for ATP. Arg131 is a substrate binding site. Positions 162–492 (EKEISTIEKP…DPLELLEVVD (331 aa)) are 3-dehydroquinate synthase.

This sequence in the N-terminal section; belongs to the shikimate kinase family. In the C-terminal section; belongs to the sugar phosphate cyclases superfamily. Dehydroquinate synthase family. Mg(2+) is required as a cofactor. NAD(+) serves as cofactor. It depends on a divalent metal cation as a cofactor.

The protein localises to the cytoplasm. The catalysed reaction is 7-phospho-2-dehydro-3-deoxy-D-arabino-heptonate = 3-dehydroquinate + phosphate. The enzyme catalyses shikimate + ATP = 3-phosphoshikimate + ADP + H(+). Its pathway is metabolic intermediate biosynthesis; chorismate biosynthesis; chorismate from D-erythrose 4-phosphate and phosphoenolpyruvate: step 2/7. The protein operates within metabolic intermediate biosynthesis; chorismate biosynthesis; chorismate from D-erythrose 4-phosphate and phosphoenolpyruvate: step 5/7. Its function is as follows. Catalyzes the specific phosphorylation of the 3-hydroxyl group of shikimic acid using ATP as a cosubstrate. This chain is Bifunctional shikimate kinase/3-dehydroquinate synthase (aroKB), found in Thermotoga maritima (strain ATCC 43589 / DSM 3109 / JCM 10099 / NBRC 100826 / MSB8).